A 356-amino-acid polypeptide reads, in one-letter code: Chorismate synthase (356 aa).

NADP(+) is bound at residue arginine 46. FMN contacts are provided by residues 122–124 (RSS), 234–235 (NG), glycine 274, 289–293 (KPTPS), and arginine 315.

It belongs to the chorismate synthase family. In terms of assembly, homotetramer. The cofactor is FMNH2.

The enzyme catalyses 5-O-(1-carboxyvinyl)-3-phosphoshikimate = chorismate + phosphate. The protein operates within metabolic intermediate biosynthesis; chorismate biosynthesis; chorismate from D-erythrose 4-phosphate and phosphoenolpyruvate: step 7/7. In terms of biological role, catalyzes the anti-1,4-elimination of the C-3 phosphate and the C-6 proR hydrogen from 5-enolpyruvylshikimate-3-phosphate (EPSP) to yield chorismate, which is the branch point compound that serves as the starting substrate for the three terminal pathways of aromatic amino acid biosynthesis. This reaction introduces a second double bond into the aromatic ring system. This chain is Chorismate synthase, found in Campylobacter fetus subsp. fetus (strain 82-40).